Consider the following 1076-residue polypeptide: Carbamoyl phosphate synthase large chain (1076 aa).

The tract at residues 1–403 (MPKRTDIQSI…SLQKALRGLE (403 aa)) is carboxyphosphate synthetic domain. Residues Arg129, Arg169, Gly175, Gly176, Glu208, Leu210, Glu215, Gly241, Ile242, His243, Gln285, and Glu299 each coordinate ATP. The ATP-grasp 1 domain occupies 133–328 (DKAMKSIGLE…IAKVAAKLAV (196 aa)). Mg(2+) is bound by residues Gln285, Glu299, and Asn301. Residues Gln285, Glu299, and Asn301 each contribute to the Mn(2+) site. The oligomerization domain stretch occupies residues 404–553 (VGAAGLDEKV…YSTYDEECEA (150 aa)). The tract at residues 554–935 (NPTDKDKIMV…AYAKAELGCG (382 aa)) is carbamoyl phosphate synthetic domain. Residues 678-869 (QQAVQRLGLK…LAKIAARVMV (192 aa)) form the ATP-grasp 2 domain. Arg714, Arg753, Leu755, Glu760, Gly785, Val786, His787, Ser788, Gln828, and Glu840 together coordinate ATP. Gln828, Glu840, and Asn842 together coordinate Mg(2+). Gln828, Glu840, and Asn842 together coordinate Mn(2+). One can recognise an MGS-like domain in the interval 936–1076 (SVYPEGGRAL…LHARVKANQA (141 aa)). The tract at residues 936 to 1076 (SVYPEGGRAL…LHARVKANQA (141 aa)) is allosteric domain.

The protein belongs to the CarB family. As to quaternary structure, composed of two chains; the small (or glutamine) chain promotes the hydrolysis of glutamine to ammonia, which is used by the large (or ammonia) chain to synthesize carbamoyl phosphate. Tetramer of heterodimers (alpha,beta)4. The cofactor is Mg(2+). Mn(2+) serves as cofactor.

The enzyme catalyses hydrogencarbonate + L-glutamine + 2 ATP + H2O = carbamoyl phosphate + L-glutamate + 2 ADP + phosphate + 2 H(+). The catalysed reaction is hydrogencarbonate + NH4(+) + 2 ATP = carbamoyl phosphate + 2 ADP + phosphate + 2 H(+). It participates in amino-acid biosynthesis; L-arginine biosynthesis; carbamoyl phosphate from bicarbonate: step 1/1. It functions in the pathway pyrimidine metabolism; UMP biosynthesis via de novo pathway; (S)-dihydroorotate from bicarbonate: step 1/3. Its function is as follows. Large subunit of the glutamine-dependent carbamoyl phosphate synthetase (CPSase). CPSase catalyzes the formation of carbamoyl phosphate from the ammonia moiety of glutamine, carbonate, and phosphate donated by ATP, constituting the first step of 2 biosynthetic pathways, one leading to arginine and/or urea and the other to pyrimidine nucleotides. The large subunit (synthetase) binds the substrates ammonia (free or transferred from glutamine from the small subunit), hydrogencarbonate and ATP and carries out an ATP-coupled ligase reaction, activating hydrogencarbonate by forming carboxy phosphate which reacts with ammonia to form carbamoyl phosphate. This Vibrio cholerae serotype O1 (strain ATCC 39315 / El Tor Inaba N16961) protein is Carbamoyl phosphate synthase large chain.